The chain runs to 91 residues: Small ribosomal subunit protein uS19 (91 aa).

The protein belongs to the universal ribosomal protein uS19 family.

Protein S19 forms a complex with S13 that binds strongly to the 16S ribosomal RNA. This chain is Small ribosomal subunit protein uS19, found in Synechococcus sp. (strain WH7803).